The chain runs to 370 residues: A-type ATP synthase subunit C (370 aa).

This sequence belongs to the V-ATPase V0D/AC39 subunit family. In terms of assembly, has multiple subunits with at least A(3), B(3), C, D, E, F, H, I and proteolipid K(x).

Its subcellular location is the cell membrane. In terms of biological role, component of the A-type ATP synthase that produces ATP from ADP in the presence of a proton gradient across the membrane. This Pyrococcus horikoshii (strain ATCC 700860 / DSM 12428 / JCM 9974 / NBRC 100139 / OT-3) protein is A-type ATP synthase subunit C.